Here is a 290-residue protein sequence, read N- to C-terminus: Bifunctional protein FolD (290 aa).

NADP(+) contacts are provided by residues 166–168 (GAS) and I232.

Belongs to the tetrahydrofolate dehydrogenase/cyclohydrolase family. In terms of assembly, homodimer.

It catalyses the reaction (6R)-5,10-methylene-5,6,7,8-tetrahydrofolate + NADP(+) = (6R)-5,10-methenyltetrahydrofolate + NADPH. The catalysed reaction is (6R)-5,10-methenyltetrahydrofolate + H2O = (6R)-10-formyltetrahydrofolate + H(+). It functions in the pathway one-carbon metabolism; tetrahydrofolate interconversion. Catalyzes the oxidation of 5,10-methylenetetrahydrofolate to 5,10-methenyltetrahydrofolate and then the hydrolysis of 5,10-methenyltetrahydrofolate to 10-formyltetrahydrofolate. This chain is Bifunctional protein FolD, found in Proteus mirabilis (strain HI4320).